The primary structure comprises 43 residues: Metallothionein A (43 aa).

Residues 1–16 (SCAGSCKCKNCRCRSC) form a beta region. C2, C6, C8, C11, C13, C16, C20, C21, C23, C24, C28, C31, C35, and C37 together coordinate a divalent metal cation. The segment at 17 to 43 (RKSCCSCCPAGCNNCAKGCVCKEPASS) is alpha.

This sequence belongs to the metallothionein superfamily. Type 1 family.

Its function is as follows. Metallothioneins have a high content of cysteine residues that bind various heavy metals. This is Metallothionein A from Colinus virginianus (Northern bobwhite).